Here is a 210-residue protein sequence, read N- to C-terminus: Thymidylate kinase (210 aa).

Gly-10–Ser-17 contributes to the ATP binding site.

Belongs to the thymidylate kinase family.

It catalyses the reaction dTMP + ATP = dTDP + ADP. Functionally, phosphorylation of dTMP to form dTDP in both de novo and salvage pathways of dTTP synthesis. This chain is Thymidylate kinase, found in Pseudomonas syringae pv. tomato (strain ATCC BAA-871 / DC3000).